A 139-amino-acid polypeptide reads, in one-letter code: Maintenance of telomere capping protein 7 (139 aa).

The next 2 helical transmembrane spans lie at 13–33 (SHHV…FVLL) and 42–62 (FYFL…FVFI). Positions 94-121 (RSVANPALPPQKKKKKKKKGTLRTGEVE) are disordered. The span at 104 to 114 (QKKKKKKKKGT) shows a compositional bias: basic residues.

Its subcellular location is the membrane. Functionally, may be involved in telomere capping. In Saccharomyces cerevisiae (strain ATCC 204508 / S288c) (Baker's yeast), this protein is Maintenance of telomere capping protein 7 (MTC7).